Here is a 221-residue protein sequence, read N- to C-terminus: Oxaloacetate tautomerase FAHD1, mitochondrial (221 aa).

Residues 1–24 constitute a mitochondrion transit peptide; the sequence is MAASRPLSRFWEWGKNIVCVGRNY. Arg22 contacts oxalate. Residue Ser37 is modified to Phosphoserine. 3 residues coordinate Mg(2+): Glu68, Glu70, and Asp99. Lys110 carries the post-translational modification N6-acetyllysine. The residue at position 112 (Lys112) is an N6-succinyllysine. 2 residues coordinate oxalate: Lys120 and Thr189.

Belongs to the FAH family. In terms of assembly, homodimer. Mg(2+) is required as a cofactor. Requires Mn(2+) as cofactor. As to expression, ubiquitous (at protein level).

It is found in the mitochondrion. Its subcellular location is the cytoplasm. It localises to the cytosol. The enzyme catalyses oxaloacetate = enol-oxaloacetate. It catalyses the reaction oxaloacetate + H(+) = pyruvate + CO2. The catalysed reaction is a 3-acylpyruvate + H2O = a carboxylate + pyruvate + H(+). It carries out the reaction acetylpyruvate + H2O = acetate + pyruvate + H(+). The enzyme catalyses 3-fumarylpyruvate + H2O = fumarate + pyruvate + H(+). Its activity is regulated as follows. Oxaloacetate decarboxylation is competitively inhibited by oxalate. In terms of biological role, tautomerase that converts enol-oxaloacetate, a strong inhibitor of succinate dehydrogenase, to the physiological keto form of oxaloacetate. It is thereby required to maximize aerobic respiration efficiency by preventing succinate dehydrogenase inhibition. Also acts as a weak oxaloacetate decarboxylase (ODx), catalyzing the decarboxylation of oxaloacetate (OAA) to pyruvate and CO(2), and as such is likely a regulatory enzyme in the TCA cycle. Also displays acylpyruvase activity, being able to hydrolyze acetylpyruvate and fumarylpyruvate in vitro. Exhibits only a weak hydrolase activity on methylacetopyruvate and acetylacetone, and no activity toward acetoacetyl-CoA. This chain is Oxaloacetate tautomerase FAHD1, mitochondrial, found in Homo sapiens (Human).